Here is a 371-residue protein sequence, read N- to C-terminus: Epoxyqueuosine reductase (371 aa).

Asp-137 (proton donor) is an active-site residue. Residues 179-211 (IPLPVDTPVENQCGKCTACISSCPTNAILENGV) enclose the 4Fe-4S ferredoxin-type domain. 8 residues coordinate [4Fe-4S] cluster: Cys-191, Cys-194, Cys-197, Cys-201, Cys-217, Cys-244, Cys-247, and Cys-251.

This sequence belongs to the QueG family. In terms of assembly, monomer. Cob(II)alamin is required as a cofactor. It depends on [4Fe-4S] cluster as a cofactor.

The protein localises to the cytoplasm. It carries out the reaction epoxyqueuosine(34) in tRNA + AH2 = queuosine(34) in tRNA + A + H2O. Its pathway is tRNA modification; tRNA-queuosine biosynthesis. Catalyzes the conversion of epoxyqueuosine (oQ) to queuosine (Q), which is a hypermodified base found in the wobble positions of tRNA(Asp), tRNA(Asn), tRNA(His) and tRNA(Tyr). The chain is Epoxyqueuosine reductase from Aliivibrio fischeri (strain ATCC 700601 / ES114) (Vibrio fischeri).